We begin with the raw amino-acid sequence, 875 residues long: Neurotrypsin (875 aa).

A signal peptide spans 1–20 (MTLARFVLALVLGALPEVVG). The N-linked (GlcNAc...) asparagine glycan is linked to Asn26. Residues 30 to 87 (HHRHRHSPPPGPQYPYYLPTHQRPPRTRPPPPLPRFPRPPRALPAQRPHALQAGHTPR) form a disordered region. Residues 56–71 (TRPPPPLPRFPRPPRA) are compositionally biased toward pro residues. In terms of domain architecture, Kringle spans 93–165 (CPAGELWVSV…GKVDWGYCDC (73 aa)). 20 cysteine pairs are disulfide-bonded: Cys93–Cys165, Cys109–Cys149, Cys138–Cys163, Cys195–Cys259, Cys208–Cys269, Cys239–Cys249, Cys305–Cys369, Cys318–Cys379, Cys349–Cys359, Cys412–Cys475, Cys425–Cys485, Cys455–Cys465, Cys525–Cys589, Cys538–Cys599, Cys569–Cys579, Cys619–Cys750, Cys661–Cys677, Cys765–Cys831, Cys794–Cys808, and Cys821–Cys850. SRCR domains lie at 170–271 (VRLR…TCSF), 280–381 (IRLV…SCTP), 387–487 (IRLA…ACYP), and 500–601 (VRLM…ICDY). The interval 619-630 (CGLRLLHRRQKR) is zymogen activation region. One can recognise a Peptidase S1 domain in the interval 631–874 (IIGGKNSLRG…FVPWIKSVTK (244 aa)). Residue His676 is the Charge relay system of the active site. N-linked (GlcNAc...) asparagine glycosylation is present at Asn683. Asp726 acts as the Charge relay system in catalysis. The active-site Charge relay system is the Ser825.

It belongs to the peptidase S1 family.

The protein localises to the secreted. In terms of biological role, plays a role in neuronal plasticity and the proteolytic action may subserve structural reorganizations associated with learning and memory operations. The protein is Neurotrypsin (PRSS12) of Macaca mulatta (Rhesus macaque).